A 376-amino-acid chain; its full sequence is Growth/differentiation factor 8 (376 aa).

Residues 1–24 (MIQKPQMYVYIYLFVLIAAGPVDL) form the signal peptide. Positions 25 to 267 (NEDSEREANV…VTDTPKRSRR (243 aa)) are excised as a propeptide. Asparagine 72 carries N-linked (GlcNAc...) asparagine glycosylation. Disulfide bonds link cysteine 273-cysteine 283, cysteine 282-cysteine 341, cysteine 310-cysteine 373, and cysteine 314-cysteine 375.

The protein belongs to the TGF-beta family. Homodimer; disulfide-linked. Interacts with WFIKKN2, leading to inhibit its activity. Interacts with FSTL3. Synthesized as large precursor molecule that undergoes proteolytic cleavage to generate an N-terminal propeptide and a disulfide linked C-terminal dimer, which is the biologically active molecule. The circulating form consists of a latent complex of the C-terminal dimer and other proteins, including its propeptide, which maintain the C-terminal dimer in a latent, inactive state. Ligand activation requires additional cleavage of the prodomain by a tolloid-like metalloproteinase.

It is found in the secreted. Its function is as follows. Acts specifically as a negative regulator of skeletal muscle growth. This is Growth/differentiation factor 8 (Mstn) from Rattus norvegicus (Rat).